The following is a 208-amino-acid chain: Small ribosomal subunit protein uS4 (208 aa).

The region spanning 98–160 (CRLDNVVYRM…AKKQSRIQLA (63 aa)) is the S4 RNA-binding domain.

The protein belongs to the universal ribosomal protein uS4 family. As to quaternary structure, part of the 30S ribosomal subunit. Contacts protein S5. The interaction surface between S4 and S5 is involved in control of translational fidelity.

Its function is as follows. One of the primary rRNA binding proteins, it binds directly to 16S rRNA where it nucleates assembly of the body of the 30S subunit. With S5 and S12 plays an important role in translational accuracy. The polypeptide is Small ribosomal subunit protein uS4 (Vesicomyosocius okutanii subsp. Calyptogena okutanii (strain HA)).